We begin with the raw amino-acid sequence, 67 residues long: Peptide Hp1036 (67 aa).

Positions 1–23 (MKTQFAILLITLVLFQMFSQSDA) are cleaved as a signal peptide. Phenylalanine amide is present on phenylalanine 36. Positions 40 to 67 (GLNDLSDLDELFDGEISEADVDFLREIM) are excised as a propeptide.

The protein belongs to the non-disulfide-bridged peptide (NDBP) superfamily. Short antimicrobial peptide (group 4) family. Expressed by the venom gland.

It localises to the secreted. It is found in the target cell membrane. In terms of biological role, amphipathic peptide with antibacterial activities. Shows antiviral activities against the herpes simplex virus type-1. It potently inhibits the initial infection by provoking the rupture of viral envelop and the dissociation of proteins from the virions (EC(50) is 0.43 uM). It also effectively inhibits viral attachment (EC(50) is 2.87 uM), viral entry (EC(50) is 4.29 uM) and viral proliferation after infection (EC(50) is 7.86). Morever, it enters mammalian tested cells (Vero) and reduces the intracellular infectivity. The chain is Peptide Hp1036 from Heterometrus petersii (Asian forest scorpion).